The primary structure comprises 476 residues: Cysteine--tRNA ligase (476 aa).

Position 28 (C28) interacts with Zn(2+). The 'HIGH' region signature appears at 30-40 (PTVYDNTHLGH). 3 residues coordinate Zn(2+): C208, H233, and E237. The short motif at 265 to 269 (KMSKS) is the 'KMSKS' region element. Position 268 (K268) interacts with ATP.

The protein belongs to the class-I aminoacyl-tRNA synthetase family. It depends on Zn(2+) as a cofactor.

The protein localises to the cytoplasm. The enzyme catalyses tRNA(Cys) + L-cysteine + ATP = L-cysteinyl-tRNA(Cys) + AMP + diphosphate. The polypeptide is Cysteine--tRNA ligase (Methanococcus maripaludis (strain DSM 14266 / JCM 13030 / NBRC 101832 / S2 / LL)).